A 506-amino-acid polypeptide reads, in one-letter code: MSESHSQDGAPQALDMNNELRSRREKLGQLRQQGIAFPNDFRRDAVSDQLHARYGEKSNEELEALNIEVSIAGRMMTRRIMGKASFATLQDVGGKIQLYVARDDLPEGQYNEQFKKWDLGDILGTRGKLFKTRTGELSVHCSEIRLLTKAMRPLPDKFHGLADQETRYRQRYLDLIANDESRQTFKVRSRIMAEIRRFMMDNDFMEVETPMMQTIPGGAAARPFITHHNALGIDMYLRIAPELYLKRLVVGGFERVFEINRNFRNEGLSPRHNPEFTMMELYMAYADYRDLIVLVETLFRTLTQRVLGSSVVHNGDQTFDFGKPFTQMTMKEAICHYRPETRPEALDDMASATAIAESLGIKVDKSWGLGRVQTEVFEETAESHLIQPTFITAYPAEVSPLARRNDDNPFFTDRFEFFIGGREIGNGFSELNDAEDQAARFAEQAQAKDAGDDEAMFYDEDYVTALEHGLPPTAGLGIGIDRLMMLLTNSHTIRDVILFPALRPQK.

2 residues coordinate Mg(2+): Glu-416 and Glu-423.

This sequence belongs to the class-II aminoacyl-tRNA synthetase family. As to quaternary structure, homodimer. The cofactor is Mg(2+).

It localises to the cytoplasm. The catalysed reaction is tRNA(Lys) + L-lysine + ATP = L-lysyl-tRNA(Lys) + AMP + diphosphate. This is Lysine--tRNA ligase from Sodalis glossinidius (strain morsitans).